The following is a 582-amino-acid chain: MVKRSKKSKSKRVTLKQKHKVLKKVKEHHKKKAKDAKKLGLHRKPRVEKDPGIPNDWPFKEQELKALEVRRARALEEIEQKKEARKERAKKRKLGLVDDEDTKTEGETIEDLPKVVNVRDNSERAFYKELVKVIELSDVILEVLDARDPLGTRCTDMERMVMQAGPNKHLVLLLNKIDLVPREAAEKWLMYLREEFPAVAFKCSTQEQRSNLGWKSSKASKPSNMLQTSDCLGADTLIKLLKNYSRSHELKKSITVGIIGLPNVGKSSLINSLKRAHVVNVGATPGLTRSLQEVHLDKNVKLLDCPGVVMLKSSGNDASIALRNCKRIEKLDDPVSPVKEILKLCPKDMLVTLYKIPSFEAVDDFLYKVATVRGKLKKGGLVDIDAAARIVLHDWNEGKIPYYTMPPKRDQGGHAESKIVTELAKDFNIDEVYSGESSFIGSLKTVNEFNPVIIPSNGPLNFDETMIEDESKTQTEEEAEHESDDDESMGGEEEEEAGKTKEKSETGRQNVKLYAAESMLNTKKQKAEKKKRKKAKKAGADEEDLMDGDYDFKVDYRKNKDGEDEEFQIDAKIPMAGLLPEE.

The span at 1 to 46 (MVKRSKKSKSKRVTLKQKHKVLKKVKEHHKKKAKDAKKLGLHRKPR) shows a compositional bias: basic residues. The tract at residues 1-58 (MVKRSKKSKSKRVTLKQKHKVLKKVKEHHKKKAKDAKKLGLHRKPRVEKDPGIPNDWP) is disordered. Positions 2–49 (VKRSKKSKSKRVTLKQKHKVLKKVKEHHKKKAKDAKKLGLHRKPRVEK) are basic. 3 short sequence motifs (nuclear localization signal) span residues 5-12 (SKKSKSKR), 22-29 (LKKVKEHH), and 69-76 (VRRARALE). Positions 15–94 (LKQKHKVLKK…RKERAKKRKL (80 aa)) form a coiled coil. Residues 127–311 (YKELVKVIEL…LLDCPGVVML (185 aa)) form the CP-type G domain. The DARXP motif signature appears at 145-149 (DARDP). Positions 175-178 (NKID) are G4. 175–178 (NKID) provides a ligand contact to GTP. The G5 stretch occupies residues 202–204 (KCS). Positions 260 to 267 (GLPNVGKS) are G1. Residue 263–268 (NVGKSS) coordinates GTP. The tract at residues 281-456 (VGATPGLTRS…NEFNPVIIPS (176 aa)) is intermediate. Residues 286–290 (GLTRS) are G2. Residues 304–307 (DCPG) and Gly-307 contribute to the GTP site. Residues 304–307 (DCPG) form a G3 region. The segment at 463–551 (DETMIEDESK…EEDLMDGDYD (89 aa)) is acidic. The tract at residues 469–545 (DESKTQTEEE…KKAGADEEDL (77 aa)) is disordered. The span at 476–496 (EEEAEHESDDDESMGGEEEEE) shows a compositional bias: acidic residues. A compositionally biased stretch (basic and acidic residues) spans 497–506 (AGKTKEKSET). Residues 515–537 (AAESMLNTKKQKAEKKKRKKAKK) are a coiled coil. The Nuclear localization signal 4 signature appears at 522-529 (TKKQKAEK). Basic residues predominate over residues 523-537 (KKQKAEKKKRKKAKK).

This sequence belongs to the TRAFAC class YlqF/YawG GTPase family. As to quaternary structure, interacts with EBP2 and PES. As to expression, mostly expressed in flowers, siliques and inflorescence apex, and, to a lower extent, in stems and leaves.

It localises to the nucleus. Its subcellular location is the nucleolus. Involved in the differentiation of epidermal cells, probably via the regulation of the expression of meristem-related genes (e.g. CLV3, STM, KNAT1, CUC2 and AG) and of leaf polarity-related genes (e.g. YAB5, FIL, AS2, PHB and PHV). May play a role in regulating cellular proliferation. Necessary for flower development, probably by preventing apical dominance through the down-regulation of AG expression. Required for embryogenesis, leaf and cotyledon development, as well as for leaf polarity establishment. Plays an important role in plant growth and senescence by modulating ribosome biogenesis in nucleolus. Possesses GTPAse activity in vitro. Possesses RNA binding activity in vitro. Associates with ribosomes. In Arabidopsis thaliana (Mouse-ear cress), this protein is Guanine nucleotide-binding protein-like NSN1.